We begin with the raw amino-acid sequence, 405 residues long: Replication factor C large subunit (405 aa).

ATP is bound at residue G47–T54.

The protein belongs to the activator 1 small subunits family. RfcL subfamily. As to quaternary structure, heteromultimer composed of small subunits (RfcS) and large subunits (RfcL).

Part of the RFC clamp loader complex which loads the PCNA sliding clamp onto DNA. This chain is Replication factor C large subunit, found in Saccharolobus islandicus (strain Y.N.15.51 / Yellowstone #2) (Sulfolobus islandicus).